The chain runs to 947 residues: ATPase 10, plasma membrane-type (947 aa).

At 1–69 the chain is on the cytoplasmic side; it reads MAEDLDKPLL…EKQENRFVKF (69 aa). The helical transmembrane segment at 70-89 threads the bilayer; sequence LGFMWNPLSWVMEAAALMAI. At 90–101 the chain is on the extracellular side; sequence ALANSQSLGPDW. The helical transmembrane segment at 102-122 threads the bilayer; it reads EDFTGIVCLLLINATISFFEE. At 123 to 251 the chain is on the cytoplasmic side; that stretch reads NNAGNAAAAL…GHFQQVLTSI (129 aa). The helical transmembrane segment at 252–272 threads the bilayer; sequence GNFCICSIAVGMVLEIIIMFP. The Extracellular portion of the chain corresponds to 273-281; sequence VQHRSYRIG. A helical membrane pass occupies residues 282–299; the sequence is INNLLVLLIGGIPIAMPT. Over 300–650 the chain is Cytoplasmic; sequence VLSVTLAIGS…TSRAIFQRMR (351 aa). Asp-337 acts as the 4-aspartylphosphate intermediate in catalysis. Mg(2+) contacts are provided by Asp-595 and Asp-599. A helical transmembrane segment spans residues 651 to 672; sequence NYTVYAVSITIRIVLGFTLLAL. The Extracellular segment spans residues 673–677; that stretch reads IWEYD. Residues 678 to 700 traverse the membrane as a helical segment; it reads FPPFMVLIIAILNDGTIMTISKD. The Cytoplasmic segment spans residues 701-716; the sequence is RVRPSPTPESWKLNQI. A helical membrane pass occupies residues 717 to 737; it reads FATGIVIGTYLALVTVLFYWI. Topologically, residues 738 to 758 are extracellular; sequence IVSTTFFEKHFHVKSIANNSE. Residues 759-779 form a helical membrane-spanning segment; that stretch reads QVSSAMYLQVSIISQALIFVT. Topologically, residues 780–791 are cytoplasmic; it reads RSRGWSFFERPG. Residues 792-812 form a helical membrane-spanning segment; it reads TLLIFAFILAQLAATLIAVYA. Topologically, residues 813-820 are extracellular; that stretch reads NISFAKIT. Residues 821-841 traverse the membrane as a helical segment; it reads GIGWRWAGVIWLYSLIFYIPL. Residues 842–947 lie on the Cytoplasmic side of the membrane; that stretch reads DVIKFVFHYA…QRMIRAAHTV (106 aa). Ser-897 and Ser-929 each carry phosphoserine. Thr-946 carries the phosphothreonine modification.

This sequence belongs to the cation transport ATPase (P-type) (TC 3.A.3) family. Type IIIA subfamily. Found primarily in developing seeds. Expressed in guard cells, mesophyll cells, leaves and roots.

It localises to the membrane. It catalyses the reaction ATP + H2O + H(+)(in) = ADP + phosphate + 2 H(+)(out). The plasma membrane H(+) ATPase of plants and fungi generates a proton gradient that drives the active transport of nutrients by H(+)-symport. The resulting external acidification and/or internal alkinization may mediate growth responses. The sequence is that of ATPase 10, plasma membrane-type (AHA10) from Arabidopsis thaliana (Mouse-ear cress).